Consider the following 228-residue polypeptide: Phosphoribosylformylglycinamidine synthase subunit PurQ (228 aa).

The 227-residue stretch at 2–228 folds into the Glutamine amidotransferase type-1 domain; it reads TVVVVQFGGS…DGKGILQAFG (227 aa). Cys88 acts as the Nucleophile in catalysis. Residues His205 and Glu207 contribute to the active site.

Part of the FGAM synthase complex composed of 1 PurL, 1 PurQ and 2 PurS subunits.

Its subcellular location is the cytoplasm. It carries out the reaction N(2)-formyl-N(1)-(5-phospho-beta-D-ribosyl)glycinamide + L-glutamine + ATP + H2O = 2-formamido-N(1)-(5-O-phospho-beta-D-ribosyl)acetamidine + L-glutamate + ADP + phosphate + H(+). The enzyme catalyses L-glutamine + H2O = L-glutamate + NH4(+). It participates in purine metabolism; IMP biosynthesis via de novo pathway; 5-amino-1-(5-phospho-D-ribosyl)imidazole from N(2)-formyl-N(1)-(5-phospho-D-ribosyl)glycinamide: step 1/2. Part of the phosphoribosylformylglycinamidine synthase complex involved in the purines biosynthetic pathway. Catalyzes the ATP-dependent conversion of formylglycinamide ribonucleotide (FGAR) and glutamine to yield formylglycinamidine ribonucleotide (FGAM) and glutamate. The FGAM synthase complex is composed of three subunits. PurQ produces an ammonia molecule by converting glutamine to glutamate. PurL transfers the ammonia molecule to FGAR to form FGAM in an ATP-dependent manner. PurS interacts with PurQ and PurL and is thought to assist in the transfer of the ammonia molecule from PurQ to PurL. The polypeptide is Phosphoribosylformylglycinamidine synthase subunit PurQ (Haloquadratum walsbyi (strain DSM 16790 / HBSQ001)).